The sequence spans 158 residues: SsrA-binding protein (158 aa).

Positions 133–148 (KAQDKRETSAKRDWNR) are enriched in basic and acidic residues. Positions 133–158 (KAQDKRETSAKRDWNRQKARLLKQNG) are disordered. Positions 149–158 (QKARLLKQNG) are enriched in basic residues.

This sequence belongs to the SmpB family.

The protein localises to the cytoplasm. Required for rescue of stalled ribosomes mediated by trans-translation. Binds to transfer-messenger RNA (tmRNA), required for stable association of tmRNA with ribosomes. tmRNA and SmpB together mimic tRNA shape, replacing the anticodon stem-loop with SmpB. tmRNA is encoded by the ssrA gene; the 2 termini fold to resemble tRNA(Ala) and it encodes a 'tag peptide', a short internal open reading frame. During trans-translation Ala-aminoacylated tmRNA acts like a tRNA, entering the A-site of stalled ribosomes, displacing the stalled mRNA. The ribosome then switches to translate the ORF on the tmRNA; the nascent peptide is terminated with the 'tag peptide' encoded by the tmRNA and targeted for degradation. The ribosome is freed to recommence translation, which seems to be the essential function of trans-translation. This is SsrA-binding protein from Jannaschia sp. (strain CCS1).